We begin with the raw amino-acid sequence, 530 residues long: FSD1-like protein (530 aa).

Met1 carries the N-acetylmethionine modification. The stretch at 102–141 (KQEQARKSQELQSQISQCNNALENSEELLEFATRSLDIKE) forms a coiled coil. The 58-residue stretch at 137–194 (LDIKEPEEFSKAARQIKDRVTMASAFRLSLKPKVSDNMTHLMVDFSQERQMLQTLKFL) folds into the COS domain. The 105-residue stretch at 196–300 (VPKAPEIDPV…DPVTLETKAL (105 aa)) folds into the Fibronectin type-III domain. One can recognise a B30.2/SPRY domain in the interval 300-506 (LNFNLDNSSS…LSTGMQVPSA (207 aa)). The tract at residues 322–366 (WDPTGGKGQESKIKGKENKGRSGTPSPKRTSVGSRPPAVRGSRDR) is disordered. Residues 330–341 (QESKIKGKENKG) show a composition bias toward basic and acidic residues. A compositionally biased stretch (polar residues) spans 342–354 (RSGTPSPKRTSVG). Phosphoserine is present on residues Ser520 and Ser523.

The protein is FSD1-like protein (FSD1L) of Homo sapiens (Human).